Reading from the N-terminus, the 179-residue chain is Peptidyl-prolyl cis-trans isomerase H (179 aa).

The PPIase cyclophilin-type domain maps to 16 to 178 (FFDISIGDTP…LQVRIAECGE (163 aa)).

This sequence belongs to the cyclophilin-type PPIase family. PPIase H subfamily.

Its subcellular location is the nucleus. The enzyme catalyses [protein]-peptidylproline (omega=180) = [protein]-peptidylproline (omega=0). Its function is as follows. PPIases accelerate the folding of proteins. It catalyzes the cis-trans isomerization of proline imidic peptide bonds in oligopeptides. This Cryptococcus neoformans var. neoformans serotype D (strain B-3501A) (Filobasidiella neoformans) protein is Peptidyl-prolyl cis-trans isomerase H (CYP3).